The following is a 519-amino-acid chain: Importin subunit alpha-9 (519 aa).

The interval 1–29 is disordered; that stretch reads MADDGSASNRRDPIKSSVGNVAGQRRRKQ. ARM repeat units lie at residues 116-156, 158-197, 200-239, 244-283, 286-326, 335-374, 377-416, and 429-468; these read FPPV…NIAA, KPEE…NVAG, EDLR…NLIK, KAAA…YLSA, DIAT…NFVA, ILIR…NIAA, IEHK…NLCV, and QEHL…LVLR.

It belongs to the importin alpha family. As to quaternary structure, forms a complex with importin subunit beta-1.

It is found in the nucleus envelope. Its function is as follows. Binds to conventional NLS motifs and mediates nuclear protein import across the nuclear envelope. Acts as a cellular receptor for the nuclear import of the virD2 protein of Agrobacterium, but is not essential for Agrobacterium-mediated root transformation. The polypeptide is Importin subunit alpha-9 (Arabidopsis thaliana (Mouse-ear cress)).